We begin with the raw amino-acid sequence, 796 residues long: Armadillo repeat-containing protein wrm-1 (796 aa).

Residues 17–59 (NFNPMTPSTSRVSTPVRPSSTMSARQYSGSPFKAQPQNMEPSN) form a disordered region. The stretch at 462-504 (ESIHCIVQLIGCSDVTIVELATGTLRNIGLHNKMNKAFMVQDG) is one ARM repeat.

In terms of assembly, interacts (independently of ARM repeat) with nhr-25. Component of the beta-catenin-lit-1 complex (also called the lit-1/wrm-1 complex or the wrm-1/lit-1 kinase complex) at least composed of lit-1 and wrm-1. Interacts (via N-terminus) with lit-1; the interaction is direct and activates lit-1 kinase activity which leads to the phosphorylation of pop-1. This promotes pop-1 interaction with par-5 and translocation of pop-1 from the nucleus to the cytoplasm.

It localises to the cytoplasm. The protein localises to the cell cortex. Its subcellular location is the nucleus. Functionally, antagonistic role in the Wnt signaling pathway that operates in embryogenesis. When located at the cortex it has been shown to inhibit Wnt signaling during asymmetric cell division but when relocated to the nucleus it shows positive regulation. Has a role in blastomere signaling during endoderm specification. Component of the beta-catenin-lit-1 complex which promotes phosphorylation, down-regulation and subcellular relocation of pop-1. Within the complex, activates lit-1-dependent kinase activity. Can substitute for bar-1 indicating functional redundancy. Appears to have a role in centrosome positioning and can activation transcription in yeast. Involved in the development of distal tip cells (DTC) by regulating the asymmetric distribution of cye-1 and cki-1 between the daughters of Z1.a and Z4.p cells. In Caenorhabditis elegans, this protein is Armadillo repeat-containing protein wrm-1.